The primary structure comprises 541 residues: Chaperonin GroEL 2 (541 aa).

Residues 29–32 (TLGP), 86–90 (DGTTT), glycine 413, 476–478 (NAA), and aspartate 492 contribute to the ATP site.

It belongs to the chaperonin (HSP60) family. As to quaternary structure, forms a cylinder of 14 subunits composed of two heptameric rings stacked back-to-back. Interacts with the co-chaperonin GroES.

The protein resides in the secreted. The protein localises to the capsule. Its subcellular location is the cell surface. It localises to the cell wall. The enzyme catalyses ATP + H2O + a folded polypeptide = ADP + phosphate + an unfolded polypeptide.. Together with its co-chaperonin GroES, plays an essential role in assisting protein folding. The GroEL-GroES system forms a nano-cage that allows encapsulation of the non-native substrate proteins and provides a physical environment optimized to promote and accelerate protein folding. The protein is Chaperonin GroEL 2 of Mycolicibacterium paratuberculosis (strain ATCC BAA-968 / K-10) (Mycobacterium paratuberculosis).